Reading from the N-terminus, the 524-residue chain is Bifunctional purine biosynthesis protein PurH (524 aa).

Residues 1–144 enclose the MGS-like domain; it reads MTRRALVSVS…KNSAHVGVVV (144 aa).

Belongs to the PurH family.

The catalysed reaction is (6R)-10-formyltetrahydrofolate + 5-amino-1-(5-phospho-beta-D-ribosyl)imidazole-4-carboxamide = 5-formamido-1-(5-phospho-D-ribosyl)imidazole-4-carboxamide + (6S)-5,6,7,8-tetrahydrofolate. It carries out the reaction IMP + H2O = 5-formamido-1-(5-phospho-D-ribosyl)imidazole-4-carboxamide. It functions in the pathway purine metabolism; IMP biosynthesis via de novo pathway; 5-formamido-1-(5-phospho-D-ribosyl)imidazole-4-carboxamide from 5-amino-1-(5-phospho-D-ribosyl)imidazole-4-carboxamide (10-formyl THF route): step 1/1. The protein operates within purine metabolism; IMP biosynthesis via de novo pathway; IMP from 5-formamido-1-(5-phospho-D-ribosyl)imidazole-4-carboxamide: step 1/1. The sequence is that of Bifunctional purine biosynthesis protein PurH from Anaeromyxobacter dehalogenans (strain 2CP-C).